Reading from the N-terminus, the 386-residue chain is DNA-directed RNA polymerase subunit Rpo1C (386 aa).

It belongs to the RNA polymerase beta' chain family. As to quaternary structure, part of the RNA polymerase complex.

It is found in the cytoplasm. The catalysed reaction is RNA(n) + a ribonucleoside 5'-triphosphate = RNA(n+1) + diphosphate. Its function is as follows. DNA-dependent RNA polymerase (RNAP) catalyzes the transcription of DNA into RNA using the four ribonucleoside triphosphates as substrates. Forms part of the jaw domain. The chain is DNA-directed RNA polymerase subunit Rpo1C from Methanococcus maripaludis (strain C7 / ATCC BAA-1331).